A 368-amino-acid polypeptide reads, in one-letter code: Probable deoxyhypusine synthase (368 aa).

NAD(+)-binding positions include 100–104 (SNLVS), 126–128 (TAG), Glu132, and Asp233. 131–132 (EE) serves as a coordination point for spermidine. Asp238 is a binding site for spermidine. Position 278 (Gly278) interacts with NAD(+). His283 is a spermidine binding site. 303–304 (TA) contacts NAD(+). Spermidine-binding positions include 309–311 (GSD) and 318–324 (EAISWGK). The Nucleophile role is filled by Lys324. An NAD(+)-binding site is contributed by 337 to 338 (EA).

Belongs to the deoxyhypusine synthase family. Requires NAD(+) as cofactor.

The catalysed reaction is [eIF5A protein]-L-lysine + spermidine = [eIF5A protein]-deoxyhypusine + propane-1,3-diamine. Its pathway is protein modification; eIF5A hypusination. Catalyzes the NAD-dependent oxidative cleavage of spermidine and the subsequent transfer of the butylamine moiety of spermidine to the epsilon-amino group of a specific lysine residue of the eIF-5A precursor protein to form the intermediate deoxyhypusine residue. In Drosophila melanogaster (Fruit fly), this protein is Probable deoxyhypusine synthase.